A 163-amino-acid chain; its full sequence is Neurotrophin-3 (163 aa).

An N-terminal signal peptide occupies residues 1–3 (IQS). A propeptide spanning residues 4-119 (TSMDQGILTE…VLNRTSRRKR (116 aa)) is cleaved from the precursor. Asn112 carries an N-linked (GlcNAc...) asparagine glycan.

The protein belongs to the NGF-beta family.

It is found in the secreted. Seems to promote the survival of visceral and proprioceptive sensory neurons. The chain is Neurotrophin-3 (NTF3) from Eryx colubrinus colubrinus.